Here is an 868-residue protein sequence, read N- to C-terminus: Spindle and centriole-associated protein 1 (868 aa).

Disordered stretches follow at residues 129–154 (RTGFPNVTMAPGSSRSPAGINQDPGT), 172–201 (DDGGAESTAHSQSEDSESELPNSLSPHSNR), 229–250 (IAAQSQRTPPGSPSSELSAEDQ), and 291–326 (KPLLSKVKRKQDMRALSKQKKNMLSSSTTSADLASS). 2 stretches are compositionally biased toward polar residues: residues 190-200 (ELPNSLSPHSN) and 229-245 (IAAQSQRTPPGSPSSEL). Residue Thr236 is modified to Phosphothreonine. Phosphoserine is present on Ser240. The span at 315–326 (SSSTTSADLASS) shows a compositional bias: low complexity. Residues 381–434 (RYLKESETQLRKEVETRQQLEQMLGDHRELIDALTAEILLLREENGAVQARLQQ) adopt a coiled-coil conformation. 2 disordered regions span residues 630–664 (PQFVSLSQPPCSSPPSTQQSRNPVFSEEPTVLGDG) and 702–722 (SSGGEHGDGLREPSRQGNASE). Low complexity predominate over residues 634–649 (SLSQPPCSSPPSTQQS). A Phosphoserine modification is found at Ser655. Residues 706–715 (EHGDGLREPS) show a composition bias toward basic and acidic residues. Residues 736–764 (SSMEERIAELNRQSMEARSKLLQLIEQQK) are a coiled coil. Phosphoserine occurs at positions 772, 773, 776, and 831. Residues 805–868 (SSKCNTVSPV…GWFALSAHLP (64 aa)) are disordered. Residues 812-831 (SPVSGVSSRRSSGAISNSCS) are compositionally biased toward low complexity.

As to quaternary structure, interacts with CEP120.

Its subcellular location is the cytoplasm. The protein resides in the cytoskeleton. It is found in the microtubule organizing center. The protein localises to the centrosome. It localises to the centriole. Its subcellular location is the spindle. In terms of biological role, regulator required for centriole duplication, for proper bipolar spindle formation and chromosome congression in mitosis. The polypeptide is Spindle and centriole-associated protein 1 (Spice1) (Rattus norvegicus (Rat)).